Reading from the N-terminus, the 224-residue chain is Adenylate kinase (224 aa).

Position 10–15 (10–15 (GSGKST)) interacts with ATP. Positions 30-59 (SSGDLIRGEIERKSSLGLEMAAYLSRGDLI) are NMP. Residues serine 31, arginine 36, 57–59 (DLI), 83–86 (GYPR), and glutamine 90 each bind AMP. The segment at 124–161 (GRRICPNCGAVYHITYNPPKVPGICDVCGTKLIQRTDD) is LID. An ATP-binding site is contributed by arginine 125. Zn(2+) contacts are provided by cysteine 128 and cysteine 131. Position 134-135 (134-135 (VY)) interacts with ATP. 2 residues coordinate Zn(2+): cysteine 148 and cysteine 151. AMP contacts are provided by arginine 158 and arginine 169. An ATP-binding site is contributed by glycine 197.

It belongs to the adenylate kinase family. In terms of assembly, monomer.

The protein localises to the cytoplasm. It catalyses the reaction AMP + ATP = 2 ADP. It functions in the pathway purine metabolism; AMP biosynthesis via salvage pathway; AMP from ADP: step 1/1. In terms of biological role, catalyzes the reversible transfer of the terminal phosphate group between ATP and AMP. Plays an important role in cellular energy homeostasis and in adenine nucleotide metabolism. This chain is Adenylate kinase, found in Thermococcus gammatolerans (strain DSM 15229 / JCM 11827 / EJ3).